The chain runs to 154 residues: Large ribosomal subunit protein uL13 (154 aa).

This sequence belongs to the universal ribosomal protein uL13 family. In terms of assembly, part of the 50S ribosomal subunit.

Its function is as follows. This protein is one of the early assembly proteins of the 50S ribosomal subunit, although it is not seen to bind rRNA by itself. It is important during the early stages of 50S assembly. This is Large ribosomal subunit protein uL13 from Cereibacter sphaeroides (strain ATCC 17029 / ATH 2.4.9) (Rhodobacter sphaeroides).